We begin with the raw amino-acid sequence, 183 residues long: ATP synthase subunit delta (183 aa).

The protein belongs to the ATPase delta chain family. F-type ATPases have 2 components, F(1) - the catalytic core - and F(0) - the membrane proton channel. F(1) has five subunits: alpha(3), beta(3), gamma(1), delta(1), epsilon(1). F(0) has three main subunits: a(1), b(2) and c(10-14). The alpha and beta chains form an alternating ring which encloses part of the gamma chain. F(1) is attached to F(0) by a central stalk formed by the gamma and epsilon chains, while a peripheral stalk is formed by the delta and b chains.

It localises to the cell inner membrane. Functionally, f(1)F(0) ATP synthase produces ATP from ADP in the presence of a proton or sodium gradient. F-type ATPases consist of two structural domains, F(1) containing the extramembraneous catalytic core and F(0) containing the membrane proton channel, linked together by a central stalk and a peripheral stalk. During catalysis, ATP synthesis in the catalytic domain of F(1) is coupled via a rotary mechanism of the central stalk subunits to proton translocation. Its function is as follows. This protein is part of the stalk that links CF(0) to CF(1). It either transmits conformational changes from CF(0) to CF(1) or is implicated in proton conduction. In Oleidesulfovibrio alaskensis (strain ATCC BAA-1058 / DSM 17464 / G20) (Desulfovibrio alaskensis), this protein is ATP synthase subunit delta.